Here is a 92-residue protein sequence, read N- to C-terminus: DNA-directed RNA polymerase subunit omega (92 aa).

It belongs to the RNA polymerase subunit omega family. As to quaternary structure, the RNAP catalytic core consists of 2 alpha, 1 beta, 1 beta' and 1 omega subunit. When a sigma factor is associated with the core the holoenzyme is formed, which can initiate transcription.

It carries out the reaction RNA(n) + a ribonucleoside 5'-triphosphate = RNA(n+1) + diphosphate. Its function is as follows. Promotes RNA polymerase assembly. Latches the N- and C-terminal regions of the beta' subunit thereby facilitating its interaction with the beta and alpha subunits. The polypeptide is DNA-directed RNA polymerase subunit omega (Corynebacterium diphtheriae (strain ATCC 700971 / NCTC 13129 / Biotype gravis)).